We begin with the raw amino-acid sequence, 220 residues long: Pyridoxine/pyridoxamine 5'-phosphate oxidase (220 aa).

FMN contacts are provided by residues 49–54, 68–69, K75, and Q97; these read RMVLLK and YT. K54 is a binding site for substrate. Positions 115, 119, and 123 each coordinate substrate. FMN contacts are provided by residues 132–133 and W176; that span reads QS. Substrate is bound at residue 182–184; the sequence is RLH. R186 contacts FMN.

It belongs to the pyridoxamine 5'-phosphate oxidase family. As to quaternary structure, homodimer. FMN serves as cofactor.

The enzyme catalyses pyridoxamine 5'-phosphate + O2 + H2O = pyridoxal 5'-phosphate + H2O2 + NH4(+). It catalyses the reaction pyridoxine 5'-phosphate + O2 = pyridoxal 5'-phosphate + H2O2. The protein operates within cofactor metabolism; pyridoxal 5'-phosphate salvage; pyridoxal 5'-phosphate from pyridoxamine 5'-phosphate: step 1/1. It functions in the pathway cofactor metabolism; pyridoxal 5'-phosphate salvage; pyridoxal 5'-phosphate from pyridoxine 5'-phosphate: step 1/1. Functionally, catalyzes the oxidation of either pyridoxine 5'-phosphate (PNP) or pyridoxamine 5'-phosphate (PMP) into pyridoxal 5'-phosphate (PLP). In Paracoccus denitrificans (strain Pd 1222), this protein is Pyridoxine/pyridoxamine 5'-phosphate oxidase.